The primary structure comprises 530 residues: GMP synthase [glutamine-hydrolyzing] (530 aa).

The Glutamine amidotransferase type-1 domain occupies 18–207 (TILVLDFGSQ…AVDICQAKTN (190 aa)). Catalysis depends on cysteine 94, which acts as the Nucleophile. Catalysis depends on residues histidine 181 and glutamate 183. A GMPS ATP-PPase domain is found at 208–405 (WSMENFIDTE…LGVPEDLVWR (198 aa)). 236–242 (SGGVDST) lines the ATP pocket. The XMP site is built by arginine 309, aspartate 467, lysine 522, and glutamate 528.

In terms of assembly, homodimer. Requires Mg(2+) as cofactor.

It is found in the cytoplasm. The protein resides in the cytosol. It catalyses the reaction XMP + L-glutamine + ATP + H2O = GMP + L-glutamate + AMP + diphosphate + 2 H(+). It participates in purine metabolism; GMP biosynthesis; GMP from XMP (L-Gln route): step 1/1. Its function is as follows. Catalyzes the conversion of xanthine monophosphate (XMP) to GMP in the presence of glutamine and ATP through an adenyl-XMP intermediate. In Candida albicans (strain SC5314 / ATCC MYA-2876) (Yeast), this protein is GMP synthase [glutamine-hydrolyzing] (GUA1).